The following is a 77-amino-acid chain: Small ribosomal subunit protein uS17c (77 aa).

Belongs to the universal ribosomal protein uS17 family. Part of the 30S ribosomal subunit.

It localises to the plastid. It is found in the chloroplast. One of the primary rRNA binding proteins, it binds specifically to the 5'-end of 16S ribosomal RNA. The protein is Small ribosomal subunit protein uS17c (rps17) of Cyanidium caldarium (Red alga).